We begin with the raw amino-acid sequence, 338 residues long: MKRMIALDGAQGEGGGQILRSALSLSMITGQPFTITGIRAGRAKPGLLRQHLTAVKAAAEICRATVEGAELGSQRLLFRPGTVRGGDYRFAIGSAGSCTLVLQTVLPALWFADGPSRVEVSGGTDNPSAPPADFIRRVLEPLLAKMGIHQQTTLLRHGFYPAGGGVVATEVSPVASFNTLQLGERGNIVQMRGEVLLAGVPRHVAEREIATLAGSFSLHEQNIHNLPRDQGPGNTVSLEVESENITERFFVVGEKRVSAEVVAAQLVKEVKRYLASTAAVGEYLADQLVLPMALAGAGEFTVAHPSCHLLTNIAVVERFLPVRFSLIETDGVTRVSIE.

ATP-binding positions include Gln103 and 283–287; that span reads YLADQ. His308 serves as the catalytic Tele-AMP-histidine intermediate.

This sequence belongs to the RNA 3'-terminal cyclase family. Type 1 subfamily.

The protein localises to the cytoplasm. The catalysed reaction is a 3'-end 3'-phospho-ribonucleotide-RNA + ATP = a 3'-end 2',3'-cyclophospho-ribonucleotide-RNA + AMP + diphosphate. Functionally, catalyzes the conversion of 3'-phosphate to a 2',3'-cyclic phosphodiester at the end of RNA. The mechanism of action of the enzyme occurs in 3 steps: (A) adenylation of the enzyme by ATP; (B) transfer of adenylate to an RNA-N3'P to produce RNA-N3'PP5'A; (C) and attack of the adjacent 2'-hydroxyl on the 3'-phosphorus in the diester linkage to produce the cyclic end product. The biological role of this enzyme is unknown but it is likely to function in some aspects of cellular RNA processing. In Escherichia coli O9:H4 (strain HS), this protein is RNA 3'-terminal phosphate cyclase.